Reading from the N-terminus, the 346-residue chain is Elongation factor Ts (346 aa).

An involved in Mg(2+) ion dislocation from EF-Tu region spans residues 80-83 (TDFV).

Belongs to the EF-Ts family.

It is found in the cytoplasm. Associates with the EF-Tu.GDP complex and induces the exchange of GDP to GTP. It remains bound to the aminoacyl-tRNA.EF-Tu.GTP complex up to the GTP hydrolysis stage on the ribosome. This is Elongation factor Ts from Streptococcus pyogenes serotype M3 (strain ATCC BAA-595 / MGAS315).